The following is a 527-amino-acid chain: MEWIADPSIWAGLITLIVIELVLGIDNLVFIAILAEKLPPKQRDRARVTGLLLAMLMRLLLLASISWLVTLTQPLFSFRSFTFSARDLIMLFGGFFLLFKATMELNERLEGKDSNNPTQRKGAKFWGVVTQIVVLDAIFSLDSVITAVGMVDHLLVMMAAVVIAISLMLMASKPLTQFVNSHPTIVILCLSFLLMIGFSLVAEGFGFVIPKGYLYAAIGFSVMIEALNQLAIFNRRRFLSANQTLRQRTTEAVMRLLSGQKEDAELDAETASMLVDHGNQQIFNPQERRMIERVLNLNQRTVSSIMTSRHDIEHIDLNAPEEEIRQLLERNQHTRLVVTDGDDAEDLLGVVHVIDLLQQSLRGEPLNLRVLIRQPLVFPETLPLLPALEQFRNARTHFAFVVDEFGSVEGIVTLSDVTETIAGNLPNEVEEIDARHDIQKNADGSWTANGHMPLEDLVQYVPLPLDEKREYHTIAGLLMEYLQRIPKPGEEVQVGDYLLKTLQVESHRVQKVQIIPLRKDGEMEYEV.

5 helical membrane-spanning segments follow: residues Ile-14–Leu-34, Leu-51–Leu-71, Phe-81–Ala-101, Ile-145–Ile-165, and Ile-185–Phe-205. CBS domains are found at residues Met-306–Leu-366 and Leu-371–Val-429.

This sequence belongs to the UPF0053 family.

Its subcellular location is the cell membrane. The sequence is that of UPF0053 protein YegH (yegH) from Escherichia coli (strain K12).